Reading from the N-terminus, the 157-residue chain is Small ribosomal subunit protein uS7cz/uS7cy (157 aa).

Belongs to the universal ribosomal protein uS7 family. Part of the 30S ribosomal subunit.

Its subcellular location is the plastid. The protein localises to the chloroplast. Functionally, one of the primary rRNA binding proteins, it binds directly to 16S rRNA where it nucleates assembly of the head domain of the 30S subunit. In Welwitschia mirabilis (Tree tumbo), this protein is Small ribosomal subunit protein uS7cz/uS7cy (rps7-A).